The sequence spans 323 residues: Sphingolipid delta(4)-desaturase DES1 (323 aa).

Transmembrane regions (helical) follow at residues 41-61 (HNLI…FYLV) and 68-88 (WLLF…TLAI). The Histidine box-1 signature appears at 89-93 (HEISH). Residues 104–124 (WNRCFGMFANLPLGLPYSVSF) traverse the membrane as a helical segment. Positions 128-132 (HMDHH) match the Histidine box-2 motif. Helical transmembrane passes span 152-172 (FFCT…FYTI), 185-205 (LEII…YTLG), and 210-230 (FYML…GHFI). The short motif at 259-263 (HNEHH) is the Histidine box-3 element.

The protein belongs to the fatty acid desaturase type 1 family. DEGS subfamily. Interacts with RLBP1; the interaction increases synthesis of chromophore-precursors by DEGS1.

Its subcellular location is the endoplasmic reticulum membrane. It catalyses the reaction an N-acylsphinganine + 2 Fe(II)-[cytochrome b5] + O2 + 2 H(+) = an N-acylsphing-4-enine + 2 Fe(III)-[cytochrome b5] + 2 H2O. The catalysed reaction is all-trans-retinol = 11-cis-retinol. The enzyme catalyses all-trans-retinol = 9-cis-retinol. It carries out the reaction all-trans-retinol = 13-cis-retinol. It catalyses the reaction 11-cis-retinol = 13-cis-retinol. The catalysed reaction is 11-cis-retinol = 9-cis-retinol. Has sphingolipid-delta-4-desaturase activity. Converts D-erythro-sphinganine to D-erythro-sphingosine (E-sphing-4-enine). Catalyzes the equilibrium isomerization of retinols. This is Sphingolipid delta(4)-desaturase DES1 (degs1) from Xenopus tropicalis (Western clawed frog).